A 468-amino-acid chain; its full sequence is 6-phospho-beta-galactosidase (468 aa).

Positions 19, 116, 159, 160, and 297 each coordinate D-galactose 6-phosphate. E160 serves as the catalytic Proton donor. E375 serves as the catalytic Nucleophile. 4 residues coordinate D-galactose 6-phosphate: S428, W429, K435, and Y437.

The protein belongs to the glycosyl hydrolase 1 family.

It catalyses the reaction a 6-phospho-beta-D-galactoside + H2O = D-galactose 6-phosphate + an alcohol. Its pathway is carbohydrate metabolism; lactose degradation; D-galactose 6-phosphate and beta-D-glucose from lactose 6-phosphate: step 1/1. In Streptococcus pyogenes serotype M5 (strain Manfredo), this protein is 6-phospho-beta-galactosidase.